Reading from the N-terminus, the 356-residue chain is tRNA N6-adenosine threonylcarbamoyltransferase (356 aa).

Fe cation-binding residues include H115 and H119. Residues 138-142 (LVSGG), D171, G184, and N283 each bind substrate. Residue D311 coordinates Fe cation.

The protein belongs to the KAE1 / TsaD family. Fe(2+) serves as cofactor.

The protein resides in the cytoplasm. It catalyses the reaction L-threonylcarbamoyladenylate + adenosine(37) in tRNA = N(6)-L-threonylcarbamoyladenosine(37) in tRNA + AMP + H(+). Required for the formation of a threonylcarbamoyl group on adenosine at position 37 (t(6)A37) in tRNAs that read codons beginning with adenine. Is involved in the transfer of the threonylcarbamoyl moiety of threonylcarbamoyl-AMP (TC-AMP) to the N6 group of A37, together with TsaE and TsaB. TsaD likely plays a direct catalytic role in this reaction. The protein is tRNA N6-adenosine threonylcarbamoyltransferase of Prochlorococcus marinus (strain NATL2A).